The chain runs to 213 residues: Orotidine 5'-phosphate decarboxylase (213 aa).

Substrate contacts are provided by residues Asp-6, Lys-25, 52–61 (DLKLADIDNT), Ser-109, 158–168 (PGVGAQGAMIG), Gly-181, and Arg-182. Lys-54 acts as the Proton donor in catalysis.

The protein belongs to the OMP decarboxylase family. Type 1 subfamily. Homodimer.

It catalyses the reaction orotidine 5'-phosphate + H(+) = UMP + CO2. It functions in the pathway pyrimidine metabolism; UMP biosynthesis via de novo pathway; UMP from orotate: step 2/2. Catalyzes the decarboxylation of orotidine 5'-monophosphate (OMP) to uridine 5'-monophosphate (UMP). The sequence is that of Orotidine 5'-phosphate decarboxylase from Sulfurisphaera tokodaii (strain DSM 16993 / JCM 10545 / NBRC 100140 / 7) (Sulfolobus tokodaii).